Reading from the N-terminus, the 178-residue chain is 2-C-methyl-D-erythritol 2,4-cyclodiphosphate synthase (178 aa).

The a divalent metal cation site is built by Asp-24, His-26, and His-61. 4-CDP-2-C-methyl-D-erythritol 2-phosphate is bound at residue 24–26 (DSH). 150–153 (TSGE) is a 4-CDP-2-C-methyl-D-erythritol 2-phosphate binding site.

Belongs to the IspF family. In terms of assembly, homotrimer. A divalent metal cation serves as cofactor.

The catalysed reaction is 4-CDP-2-C-methyl-D-erythritol 2-phosphate = 2-C-methyl-D-erythritol 2,4-cyclic diphosphate + CMP. It participates in isoprenoid biosynthesis; isopentenyl diphosphate biosynthesis via DXP pathway; isopentenyl diphosphate from 1-deoxy-D-xylulose 5-phosphate: step 4/6. Functionally, involved in the biosynthesis of isopentenyl diphosphate (IPP) and dimethylallyl diphosphate (DMAPP), two major building blocks of isoprenoid compounds. Catalyzes the conversion of 4-diphosphocytidyl-2-C-methyl-D-erythritol 2-phosphate (CDP-ME2P) to 2-C-methyl-D-erythritol 2,4-cyclodiphosphate (ME-CPP) with a corresponding release of cytidine 5-monophosphate (CMP). The protein is 2-C-methyl-D-erythritol 2,4-cyclodiphosphate synthase of Chlamydia trachomatis serovar L2b (strain UCH-1/proctitis).